Reading from the N-terminus, the 673-residue chain is UvrABC system protein B (673 aa).

Residues 26-183 (EGLEDGLAHQ…RRLAELQYTR (158 aa)) form the Helicase ATP-binding domain. An ATP-binding site is contributed by 39-46 (GVTGSGKT). Positions 92–115 (YYDYYQPEAYVPSSDTFIEKDASV) match the Beta-hairpin motif. One can recognise a Helicase C-terminal domain in the interval 431–597 (QVDDLLSEIR…GLNKKVVDIL (167 aa)). In terms of domain architecture, UVR spans 633–668 (QQKIHELEGQMMQHAQNLEFEEAAQIRDQLHQLREL).

It belongs to the UvrB family. As to quaternary structure, forms a heterotetramer with UvrA during the search for lesions. Interacts with UvrC in an incision complex.

It is found in the cytoplasm. Its function is as follows. The UvrABC repair system catalyzes the recognition and processing of DNA lesions. A damage recognition complex composed of 2 UvrA and 2 UvrB subunits scans DNA for abnormalities. Upon binding of the UvrA(2)B(2) complex to a putative damaged site, the DNA wraps around one UvrB monomer. DNA wrap is dependent on ATP binding by UvrB and probably causes local melting of the DNA helix, facilitating insertion of UvrB beta-hairpin between the DNA strands. Then UvrB probes one DNA strand for the presence of a lesion. If a lesion is found the UvrA subunits dissociate and the UvrB-DNA preincision complex is formed. This complex is subsequently bound by UvrC and the second UvrB is released. If no lesion is found, the DNA wraps around the other UvrB subunit that will check the other stand for damage. This chain is UvrABC system protein B, found in Salmonella agona (strain SL483).